Reading from the N-terminus, the 256-residue chain is MNDIWWQTYGEGNCHLVLLHGWGLNAEVWHCIREELGSHFTLHLVDLPGYGRSSGFGAMTLEEMTAQVAKNAPDQAIWLGWSLGGLVASQMALTHPERVQALVTVASSPCFSAREGWPGIKPEILGGFQQQLSDDFQRTVERFLALQTLGTETARQDARTLKSVVLAQPMPDVEVLNGGLEILKTVDLREALKNVNMPFLRLYGYLDGLVPRKIAPLLDTLWPHSTSQIMAKAAHAPFISHPAAFCQALMTLKSSL.

The AB hydrolase-1 domain maps to 15 to 242; that stretch reads HLVLLHGWGL…AAHAPFISHP (228 aa). Substrate-binding positions include Trp22, 82 to 83, and 143 to 147; these read SL and FLALQ. Ser82 acts as the Nucleophile in catalysis. Active-site residues include Asp207 and His235. His235 is a binding site for substrate.

This sequence belongs to the AB hydrolase superfamily. Carboxylesterase BioH family. As to quaternary structure, monomer.

The protein resides in the cytoplasm. It catalyses the reaction 6-carboxyhexanoyl-[ACP] methyl ester + H2O = 6-carboxyhexanoyl-[ACP] + methanol + H(+). The protein operates within cofactor biosynthesis; biotin biosynthesis. In terms of biological role, the physiological role of BioH is to remove the methyl group introduced by BioC when the pimeloyl moiety is complete. It allows to synthesize pimeloyl-ACP via the fatty acid synthetic pathway through the hydrolysis of the ester bonds of pimeloyl-ACP esters. The polypeptide is Pimeloyl-[acyl-carrier protein] methyl ester esterase (Salmonella choleraesuis (strain SC-B67)).